A 273-amino-acid polypeptide reads, in one-letter code: Large ribosomal subunit protein uL2cz/uL2cy (273 aa).

2 disordered regions span residues 1-23 and 224-273; these read MAIH…SQVK and NPVD…RRRK.

It belongs to the universal ribosomal protein uL2 family. In terms of assembly, part of the 50S ribosomal subunit.

It is found in the plastid. Its subcellular location is the chloroplast. The chain is Large ribosomal subunit protein uL2cz/uL2cy (rpl2-A) from Amborella trichopoda.